A 603-amino-acid polypeptide reads, in one-letter code: DNA mismatch repair protein MutL (603 aa).

This sequence belongs to the DNA mismatch repair MutL/HexB family.

In terms of biological role, this protein is involved in the repair of mismatches in DNA. It is required for dam-dependent methyl-directed DNA mismatch repair. May act as a 'molecular matchmaker', a protein that promotes the formation of a stable complex between two or more DNA-binding proteins in an ATP-dependent manner without itself being part of a final effector complex. The chain is DNA mismatch repair protein MutL from Sphingopyxis alaskensis (strain DSM 13593 / LMG 18877 / RB2256) (Sphingomonas alaskensis).